The following is a 241-amino-acid chain: Large ribosomal subunit protein uL2 (241 aa).

Basic residues predominate over residues methionine 1–arginine 12. Disordered stretches follow at residues methionine 1 to serine 21 and alanine 200 to arginine 241.

The protein belongs to the universal ribosomal protein uL2 family. In terms of assembly, part of the 50S ribosomal subunit. Forms a bridge to the 30S subunit in the 70S ribosome.

Its function is as follows. One of the primary rRNA binding proteins. Required for association of the 30S and 50S subunits to form the 70S ribosome, for tRNA binding and peptide bond formation. It has been suggested to have peptidyltransferase activity; this is somewhat controversial. Makes several contacts with the 16S rRNA in the 70S ribosome. The chain is Large ribosomal subunit protein uL2 from Methanothermobacter thermautotrophicus (strain ATCC 29096 / DSM 1053 / JCM 10044 / NBRC 100330 / Delta H) (Methanobacterium thermoautotrophicum).